A 344-amino-acid polypeptide reads, in one-letter code: N-acetyl-gamma-glutamyl-phosphate reductase (344 aa).

Cys147 is a catalytic residue.

This sequence belongs to the NAGSA dehydrogenase family. Type 1 subfamily.

The protein resides in the cytoplasm. The catalysed reaction is N-acetyl-L-glutamate 5-semialdehyde + phosphate + NADP(+) = N-acetyl-L-glutamyl 5-phosphate + NADPH + H(+). It participates in amino-acid biosynthesis; L-arginine biosynthesis; N(2)-acetyl-L-ornithine from L-glutamate: step 3/4. Its function is as follows. Catalyzes the NADPH-dependent reduction of N-acetyl-5-glutamyl phosphate to yield N-acetyl-L-glutamate 5-semialdehyde. The sequence is that of N-acetyl-gamma-glutamyl-phosphate reductase from Bacillus amyloliquefaciens (Bacillus velezensis).